The primary structure comprises 397 residues: Dual-specificity RNA methyltransferase RlmN (397 aa).

The active-site Proton acceptor is glutamate 130. Residues 138–377 (VEDRGAVCIS…ASPIRTPRGR (240 aa)) enclose the Radical SAM core domain. Cysteines 145 and 383 form a disulfide. Residues cysteine 152, cysteine 156, and cysteine 159 each contribute to the [4Fe-4S] cluster site. S-adenosyl-L-methionine contacts are provided by residues 209 to 210 (GE), serine 241, 263 to 265 (SLH), and asparagine 340. The active-site S-methylcysteine intermediate is the cysteine 383.

This sequence belongs to the radical SAM superfamily. RlmN family. The cofactor is [4Fe-4S] cluster.

The protein localises to the cytoplasm. It catalyses the reaction adenosine(2503) in 23S rRNA + 2 reduced [2Fe-2S]-[ferredoxin] + 2 S-adenosyl-L-methionine = 2-methyladenosine(2503) in 23S rRNA + 5'-deoxyadenosine + L-methionine + 2 oxidized [2Fe-2S]-[ferredoxin] + S-adenosyl-L-homocysteine. The catalysed reaction is adenosine(37) in tRNA + 2 reduced [2Fe-2S]-[ferredoxin] + 2 S-adenosyl-L-methionine = 2-methyladenosine(37) in tRNA + 5'-deoxyadenosine + L-methionine + 2 oxidized [2Fe-2S]-[ferredoxin] + S-adenosyl-L-homocysteine. Specifically methylates position 2 of adenine 2503 in 23S rRNA and position 2 of adenine 37 in tRNAs. m2A2503 modification seems to play a crucial role in the proofreading step occurring at the peptidyl transferase center and thus would serve to optimize ribosomal fidelity. The polypeptide is Dual-specificity RNA methyltransferase RlmN (Granulibacter bethesdensis (strain ATCC BAA-1260 / CGDNIH1)).